A 94-amino-acid chain; its full sequence is Pyrimidine/purine nucleoside phosphorylase (94 aa).

This sequence belongs to the nucleoside phosphorylase PpnP family.

It catalyses the reaction a purine D-ribonucleoside + phosphate = a purine nucleobase + alpha-D-ribose 1-phosphate. The enzyme catalyses adenosine + phosphate = alpha-D-ribose 1-phosphate + adenine. The catalysed reaction is cytidine + phosphate = cytosine + alpha-D-ribose 1-phosphate. It carries out the reaction guanosine + phosphate = alpha-D-ribose 1-phosphate + guanine. It catalyses the reaction inosine + phosphate = alpha-D-ribose 1-phosphate + hypoxanthine. The enzyme catalyses thymidine + phosphate = 2-deoxy-alpha-D-ribose 1-phosphate + thymine. The catalysed reaction is uridine + phosphate = alpha-D-ribose 1-phosphate + uracil. It carries out the reaction xanthosine + phosphate = alpha-D-ribose 1-phosphate + xanthine. Catalyzes the phosphorolysis of diverse nucleosides, yielding D-ribose 1-phosphate and the respective free bases. Can use uridine, adenosine, guanosine, cytidine, thymidine, inosine and xanthosine as substrates. Also catalyzes the reverse reactions. This Pseudomonas fluorescens (strain Pf0-1) protein is Pyrimidine/purine nucleoside phosphorylase.